Reading from the N-terminus, the 481-residue chain is Glucokinase-1 (481 aa).

One can recognise a Hexokinase domain in the interval 4–477 (PKLTKAVDSI…SGVGAALCAL (474 aa)). Positions 64–204 (SGQEHGVTML…LSNVHVVALT (141 aa)) are hexokinase small subdomain. K101 serves as a coordination point for ATP. Residues 146–172 (KMGFTFSYPVDQTSLSSGKLIRWTKGF) form a glucose-binding region. Positions 205–466 (NDTTGTLLAR…RDVHLRISKD (262 aa)) are hexokinase large subdomain. 466–471 (DGSGVG) lines the ATP pocket.

The protein belongs to the hexokinase family.

It catalyses the reaction D-glucose + ATP = D-glucose 6-phosphate + ADP + H(+). The catalysed reaction is a D-hexose + ATP = a D-hexose 6-phosphate + ADP + H(+). It carries out the reaction D-mannose + ATP = D-mannose 6-phosphate + ADP + H(+). Its pathway is carbohydrate metabolism; hexose metabolism. The protein operates within carbohydrate degradation; glycolysis; D-glyceraldehyde 3-phosphate and glycerone phosphate from D-glucose: step 1/4. Its function is as follows. Glukokinase specific for aldohexoses. Phosphorylates glucose and mannose, but not fructose. The protein is Glucokinase-1 (GLK1) of Kluyveromyces lactis (strain ATCC 8585 / CBS 2359 / DSM 70799 / NBRC 1267 / NRRL Y-1140 / WM37) (Yeast).